The chain runs to 515 residues: Lysosomal acid glucosylceramidase (515 aa).

Positions 1–19 (MAARLIGFFLFQAVSWAYG) are cleaved as a signal peptide. 2 cysteine pairs are disulfide-bonded: C23–C35 and C37–C42. N-linked (GlcNAc...) asparagine glycans are attached at residues N38 and N78. N165 carries an N-linked (GlcNAc...) (high mannose) asparagine glycan. E254 serves as the catalytic Proton donor. N289 carries an N-linked (GlcNAc...) asparagine glycan. Residue E358 is the Nucleophile of the active site. The N-linked (GlcNAc...) asparagine glycan is linked to N480.

The protein belongs to the glycosyl hydrolase 30 family. In terms of assembly, interacts with saposin-C. Interacts with SCARB2. Interacts with TCP1. Interacts with GRN; this interaction prevents aggregation of GBA1-SCARB2 complex via interaction with HSPA1A upon stress.

The protein resides in the lysosome membrane. The catalysed reaction is a beta-D-glucosyl-(1&lt;-&gt;1')-N-acylsphing-4-enine + H2O = an N-acylsphing-4-enine + D-glucose. It carries out the reaction a beta-D-galactosyl-(1&lt;-&gt;1')-N-acylsphing-4-enine + H2O = an N-acylsphing-4-enine + D-galactose. It catalyses the reaction cholesteryl 3-beta-D-glucoside + H2O = cholesterol + D-glucose. The enzyme catalyses a beta-D-glucosyl-(1&lt;-&gt;1')-N-acylsphing-4-enine + cholesterol = cholesteryl 3-beta-D-glucoside + an N-acylsphing-4-enine. The catalysed reaction is beta-D-glucosyl-(1&lt;-&gt;1')-N-hexadecanoylsphing-4-enine + cholesterol = cholesteryl 3-beta-D-glucoside + N-hexadecanoylsphing-4-enine. It carries out the reaction beta-D-glucosyl-N-(9Z-octadecenoyl)-sphing-4E-enine + cholesterol = N-(9Z-octadecenoyl)-sphing-4-enine + cholesteryl 3-beta-D-glucoside. It catalyses the reaction beta-D-glucosyl-N-octanoylsphing-4E-enine + cholesterol = N-octanoylsphing-4-enine + cholesteryl 3-beta-D-glucoside. The enzyme catalyses beta-D-glucosyl-N-dodecanoylsphing-4-enine + cholesterol = N-dodecanoylsphing-4-enine + cholesteryl 3-beta-D-glucoside. The catalysed reaction is beta-D-glucosyl-(1&lt;-&gt;1)-N-octadecanoylsphing-4-enine + cholesterol = N-octadecanoylsphing-4-enine + cholesteryl 3-beta-D-glucoside. It carries out the reaction beta-D-glucosyl-(1&lt;-&gt;1')-N-(15Z-tetracosenoyl)-sphing-4-enine + cholesterol = N-(15Z-tetracosenoyl)-sphing-4-enine + cholesteryl 3-beta-D-glucoside. It catalyses the reaction a beta-D-galactosyl-(1&lt;-&gt;1')-N-acylsphing-4-enine + cholesterol = cholesteryl 3-beta-D-galactoside + an N-acylsphing-4-enine. The enzyme catalyses 1-(beta-D-galactosyl)-N-dodecanoylsphing-4-enine + cholesterol = cholesteryl 3-beta-D-galactoside + N-dodecanoylsphing-4-enine. The catalysed reaction is a beta-D-xylosyl-(1&lt;-&gt;1')-N-acylsphing-4-enine + cholesterol = cholesteryl 3-beta-D-xyloside + an N-acylsphing-4-enine. It carries out the reaction beta-D-xylosyl-(1&lt;-&gt;1')-N-(9Z-octadecenoyl)-sphing-4-enine + cholesterol = cholesteryl 3-beta-D-xyloside + N-(9Z-octadecenoyl)-sphing-4-enine. Its pathway is steroid metabolism; cholesterol metabolism. It functions in the pathway sphingolipid metabolism. With respect to regulation, inhibited by conduritol B epoxide/CBE. Its function is as follows. Glucosylceramidase that catalyzes, within the lysosomal compartment, the hydrolysis of glucosylceramides/GlcCers (such as beta-D-glucosyl-(1&lt;-&gt;1')-N-acylsphing-4-enine) into free ceramides (such as N-acylsphing-4-enine) and glucose. Plays a central role in the degradation of complex lipids and the turnover of cellular membranes. Through the production of ceramides, participates in the PKC-activated salvage pathway of ceramide formation. Catalyzes the glucosylation of cholesterol, through a transglucosylation reaction where glucose is transferred from GlcCer to cholesterol. GlcCer containing mono-unsaturated fatty acids (such as beta-D-glucosyl-N-(9Z-octadecenoyl)-sphing-4-enine) are preferred as glucose donors for cholesterol glucosylation when compared with GlcCer containing same chain length of saturated fatty acids (such as beta-D-glucosyl-N-octadecanoyl-sphing-4-enine). Under specific conditions, may alternatively catalyze the reverse reaction, transferring glucose from cholesteryl 3-beta-D-glucoside to ceramide. Can also hydrolyze cholesteryl 3-beta-D-glucoside producing glucose and cholesterol. Catalyzes the hydrolysis of galactosylceramides/GalCers (such as beta-D-galactosyl-(1&lt;-&gt;1')-N-acylsphing-4-enine), as well as the transfer of galactose between GalCers and cholesterol in vitro, but with lower activity than with GlcCers. Contrary to GlcCer and GalCer, xylosylceramide/XylCer (such as beta-D-xyosyl-(1&lt;-&gt;1')-N-acylsphing-4-enine) is not a good substrate for hydrolysis, however it is a good xylose donor for transxylosylation activity to form cholesteryl 3-beta-D-xyloside. This chain is Lysosomal acid glucosylceramidase (Gba1), found in Mus musculus (Mouse).